A 263-amino-acid polypeptide reads, in one-letter code: Phosphate import ATP-binding protein PstB (263 aa).

In terms of domain architecture, ABC transporter spans 17 to 258; it reads IDVRDLNFYY…PRRKETEDYI (242 aa). ATP is bound at residue 49–56; the sequence is GPSGCGKS.

Belongs to the ABC transporter superfamily. Phosphate importer (TC 3.A.1.7) family. In terms of assembly, the complex is composed of two ATP-binding proteins (PstB), two transmembrane proteins (PstC and PstA) and a solute-binding protein (PstS).

Its subcellular location is the cell inner membrane. It carries out the reaction phosphate(out) + ATP + H2O = ADP + 2 phosphate(in) + H(+). Part of the ABC transporter complex PstSACB involved in phosphate import. Responsible for energy coupling to the transport system. The polypeptide is Phosphate import ATP-binding protein PstB (Ralstonia nicotianae (strain ATCC BAA-1114 / GMI1000) (Ralstonia solanacearum)).